A 426-amino-acid polypeptide reads, in one-letter code: Histidinol dehydrogenase (426 aa).

Tyrosine 123, glutamine 185, and asparagine 208 together coordinate NAD(+). Substrate-binding residues include serine 231, glutamine 253, and histidine 256. Positions 253 and 256 each coordinate Zn(2+). Residues glutamate 321 and histidine 322 each act as proton acceptor in the active site. Positions 322, 355, 409, and 414 each coordinate substrate. Position 355 (aspartate 355) interacts with Zn(2+). Residue histidine 414 coordinates Zn(2+).

It belongs to the histidinol dehydrogenase family. It depends on Zn(2+) as a cofactor.

The enzyme catalyses L-histidinol + 2 NAD(+) + H2O = L-histidine + 2 NADH + 3 H(+). The protein operates within amino-acid biosynthesis; L-histidine biosynthesis; L-histidine from 5-phospho-alpha-D-ribose 1-diphosphate: step 9/9. Functionally, catalyzes the sequential NAD-dependent oxidations of L-histidinol to L-histidinaldehyde and then to L-histidine. The polypeptide is Histidinol dehydrogenase (Bacillus licheniformis (strain ATCC 14580 / DSM 13 / JCM 2505 / CCUG 7422 / NBRC 12200 / NCIMB 9375 / NCTC 10341 / NRRL NRS-1264 / Gibson 46)).